The primary structure comprises 329 residues: Alpha/beta hydrolase domain-containing protein 17C (329 aa).

A compositionally biased stretch (low complexity) spans 53-79 (GASAPAPAQATAAAAAAQPAPQQPEEG). The disordered stretch occupies residues 53–85 (GASAPAPAQATAAAAAAQPAPQQPEEGAGAGPG). Active-site charge relay system residues include Ser211, Asp276, and His305.

This sequence belongs to the AB hydrolase superfamily. ABHD17 family. Palmitoylated on cysteine residues located in a cysteine cluster at the N-terminus which promotes membrane localization. Palmitoylation is required for post-synaptic localization and for depalmitoylating activity towards DLG4/PSD95.

The protein localises to the recycling endosome membrane. It is found in the cell projection. The protein resides in the dendritic spine. Its subcellular location is the postsynaptic density membrane. The catalysed reaction is S-hexadecanoyl-L-cysteinyl-[protein] + H2O = L-cysteinyl-[protein] + hexadecanoate + H(+). With respect to regulation, inhibited by palmostatin-B. In terms of biological role, hydrolyzes fatty acids from S-acylated cysteine residues in proteins. Has depalmitoylating activity towards NRAS and DLG4/PSD95. The chain is Alpha/beta hydrolase domain-containing protein 17C from Homo sapiens (Human).